The chain runs to 47 residues: High light-inducible protein HliC (47 aa).

Residues 1 to 14 lie on the Cytoplasmic side of the membrane; the sequence is MNNENSKFGFTAFA. The short motif at 15–20 is the Chlorophyll-binding motif element; sequence ENWNGR. Positions 15–36 form a transmembrane segment; that stretch reads ENWNGRLAMIGFSSALILELVS. The Lumenal, thylakoid segment spans residues 37–47; it reads GQGVLHFFGIL.

The protein belongs to the Hlip family. As to quaternary structure, forms heterodimers with both HliA and HliB; these are associated with photosystem II (PSII) assembly intermediates containing CP47 (psbB). In the absence of CP47 (psbB) and HliD, forms a homooligomer in vivo that binds 2 chlorophyll a and 1 beta-carotenoid per monomer. Cofractionates in an approximately 50 kDa fraction the thylakoid membrane with HliD. Associated in vivo with monomeric PSII. Purified in several chlorophyll- and carotenoid-containing complexes, including photosystem II (PSII) assembly intermediate complex RCII* (iD1, D1, D2, PsbE, PsbF, PsbI, Ycf39, Ycf48, HliC and HliD) and the Ycf39-Hlip complex (Ycf39, HliC, HliD and pigments).

Its subcellular location is the cellular thylakoid membrane. Functionally, forms a number of heteromers involved in photosystem II (PSII) assembly and/or repair under high light stress. Required for binding of chlorophyll and carotenoids by the Ycf39-Hlip complex. The Ycf39-Hlip complex binds D1 at an early stage of PSII assembly along with Ycf48, ribosomes and ChlG, the last enzyme in chlorophyll biosynthesis; it may be involved in chlorophyll reuse and delivery to D1 in the initial stages of PSII assembly. HliA-HliC and HliB-HliC heterodimers bind chlorophyll and carotenoids in a 1:0.6 ratio. Complexes bind mostly beta-carotenoid, but minor amounts of echinenone and beta-crytoxanthin are also detected. The complexes efficiently quench chlorophyll fluorescence, contributing to photoprotection. Deletion of 4 to 5 members of the Hlip family suggests the proteins are involved in regulation of chlorophyll biosynthesis, in stabilization of chlorophyll-binding proteins and/or in reuse of chlorophylls, and may regulate tetrapyrrole biosynthesis. Might bind chlorophyll and/or carotenoids in association with HliD (called the ScpBE pair). The Hlips might regulate tetrapyrrole biosynthesis, maybe at the level of aminolevulinic acid synthesis and probably stabilize PSII assembly intermediates. This Synechocystis sp. (strain ATCC 27184 / PCC 6803 / Kazusa) protein is High light-inducible protein HliC (hliC).